We begin with the raw amino-acid sequence, 229 residues long: Large ribosomal subunit protein uL1 (229 aa).

This sequence belongs to the universal ribosomal protein uL1 family. As to quaternary structure, part of the 50S ribosomal subunit.

Functionally, binds directly to 23S rRNA. The L1 stalk is quite mobile in the ribosome, and is involved in E site tRNA release. In terms of biological role, protein L1 is also a translational repressor protein, it controls the translation of the L11 operon by binding to its mRNA. In Streptococcus pyogenes serotype M3 (strain SSI-1), this protein is Large ribosomal subunit protein uL1.